The chain runs to 315 residues: MARIAYLGPEGTFTQAALLEIAAAGLVPGHDDGGAQPLPVESTPAALDAVRTGAAEFACVPIENSIDGSLAPTLDSLAIGSPLQVFAETTLDVAFSIVVRPGVGAADVRTLAAFPVAAAQVRQWLTAHLPSVELHPAYSNADAARQVAEGQVDAAVTSPLAAAHWALQSLADGVVDESNARTRFLLIGVPGPPPPRTGTDRTSVVLRIANVPGALLDALTEFGMRGIDLTRIESRPTRTGLGTYMFFVDCVGHIADDAVAEALKALHRRCADVRYLGSWPTGQTYAGQPPPADEAAIWLQQLREGKPEASPGPPL.

A Prephenate dehydratase domain is found at 3–189 (RIAYLGPEGT…ARTRFLLIGV (187 aa)). One can recognise an ACT domain in the interval 203–280 (SVVLRIANVP…ADVRYLGSWP (78 aa)).

As to quaternary structure, homodimer.

The enzyme catalyses prephenate + H(+) = 3-phenylpyruvate + CO2 + H2O. It participates in amino-acid biosynthesis; L-phenylalanine biosynthesis; phenylpyruvate from prephenate: step 1/1. In Mycobacterium marinum (strain ATCC BAA-535 / M), this protein is Prephenate dehydratase (pheA).